The primary structure comprises 316 residues: Transaldolase (316 aa).

K127 (schiff-base intermediate with substrate) is an active-site residue.

It belongs to the transaldolase family. Type 2 subfamily.

Its subcellular location is the cytoplasm. It catalyses the reaction D-sedoheptulose 7-phosphate + D-glyceraldehyde 3-phosphate = D-erythrose 4-phosphate + beta-D-fructose 6-phosphate. Its pathway is carbohydrate degradation; pentose phosphate pathway; D-glyceraldehyde 3-phosphate and beta-D-fructose 6-phosphate from D-ribose 5-phosphate and D-xylulose 5-phosphate (non-oxidative stage): step 2/3. Functionally, transaldolase is important for the balance of metabolites in the pentose-phosphate pathway. This chain is Transaldolase, found in Helicobacter pylori (strain HPAG1).